Consider the following 214-residue polypeptide: Cytochrome b (214 aa).

A run of 4 helical transmembrane segments spans residues 31 to 51 (FGSMLLACLMIQTITGFFLAI), 75 to 96 (WIMQNTXAIGASMFFICIYIHI), 111 to 131 (WLSGTTLLITLMATAFFGYVL), and 176 to 196 (FFALHFILPFIIISLSSAHIL). 2 residues coordinate heme b: residue 81 and histidine 95. Heme b contacts are provided by histidine 180 and histidine 194. An a ubiquinone-binding site is contributed by histidine 199.

Belongs to the cytochrome b family. The cytochrome bc1 complex contains 3 respiratory subunits (MT-CYB, CYC1 and UQCRFS1), 2 core proteins (UQCRC1 and UQCRC2) and probably 6 low-molecular weight proteins. It depends on heme b as a cofactor.

The protein resides in the mitochondrion inner membrane. Component of the ubiquinol-cytochrome c reductase complex (complex III or cytochrome b-c1 complex) that is part of the mitochondrial respiratory chain. The b-c1 complex mediates electron transfer from ubiquinol to cytochrome c. Contributes to the generation of a proton gradient across the mitochondrial membrane that is then used for ATP synthesis. In Bothriechis schlegelii (Eyelash palm pitviper), this protein is Cytochrome b (MT-CYB).